Reading from the N-terminus, the 320-residue chain is MQNRNTFLGVKEQITRSIFVSIMIYVITRASISNAYPIFAQQGYENPREATGRIVCANCHLASKPVDIEVPQAVLPDTVFEAVVRIPYDMQLKQVLANGKKGALNVGAVLILPEGFELAPPDRISPEVKEKMGNLSFQNYRPNKKNIIVIGPAPGQKYSEIVFPILSPDPATKKDVHFLKYPIYVGGNRGRGQIYPDGSKSNNTVYNATSAGIVSKIVRKEKGGYEITIIDASDGHQVVDIIPRGPELLVSEGESIKLDQPLTSNPNVGGFGQGDAEIVLQDPLRIQGLLFFLASVILAQIFLVLKKKQFEKVQLYEMNF.

Positions 1 to 35 are cleaved as a signal peptide; the sequence is MQNRNTFLGVKEQITRSIFVSIMIYVITRASISNA. Positions 36, 56, 59, and 60 each coordinate heme. Residues 286 to 306 traverse the membrane as a helical segment; sequence IQGLLFFLASVILAQIFLVLK.

It belongs to the cytochrome f family. As to quaternary structure, the 4 large subunits of the cytochrome b6-f complex are cytochrome b6, subunit IV (17 kDa polypeptide, petD), cytochrome f and the Rieske protein, while the 4 small subunits are PetG, PetL, PetM and PetN. The complex functions as a dimer. Heme is required as a cofactor.

The protein resides in the plastid. Its subcellular location is the chloroplast thylakoid membrane. Functionally, component of the cytochrome b6-f complex, which mediates electron transfer between photosystem II (PSII) and photosystem I (PSI), cyclic electron flow around PSI, and state transitions. The chain is Cytochrome f from Dioscorea elephantipes (Elephant's foot yam).